The chain runs to 228 residues: 2,3-bisphosphoglycerate-dependent phosphoglycerate mutase (228 aa).

Substrate contacts are provided by residues 7–14 (RHGESAWN), 20–21 (TG), Arg-59, 86–89 (ERHY), Lys-97, 113–114 (RR), and 182–183 (GN). Catalysis depends on His-8, which acts as the Tele-phosphohistidine intermediate. Glu-86 serves as the catalytic Proton donor/acceptor.

This sequence belongs to the phosphoglycerate mutase family. BPG-dependent PGAM subfamily.

The catalysed reaction is (2R)-2-phosphoglycerate = (2R)-3-phosphoglycerate. The protein operates within carbohydrate degradation; glycolysis; pyruvate from D-glyceraldehyde 3-phosphate: step 3/5. Its function is as follows. Catalyzes the interconversion of 2-phosphoglycerate and 3-phosphoglycerate. The chain is 2,3-bisphosphoglycerate-dependent phosphoglycerate mutase from Fusobacterium nucleatum subsp. nucleatum (strain ATCC 25586 / DSM 15643 / BCRC 10681 / CIP 101130 / JCM 8532 / KCTC 2640 / LMG 13131 / VPI 4355).